Here is a 346-residue protein sequence, read N- to C-terminus: MPPKIAEVIQHDVCAACGACEAVCPIGAVTVKKAAEIRDPNDLSLYEKGAAFQVCEGCLTCSRICPVVDGFIENELLNVRKFFGAKSKDNAGSQDGGVTSGILKALFNKGEIDCAVGITRNENWEPEVVLLTSAEDVERTRGTKYTSDPVVAALREAFEKYDRIAVVGVPCQAHAARLIRENVNEKIVLIIGLLCMESFHHDVMLDKIIPEIMKVNVRDIVKMEFTKGKFWVYTKDGEVHSVPIKDIAKYARNPCHHCCDYTSVFADISVGSVGAPDGWNSVFIRTEIGEKYFDMVRDEMEIMEDPKPGLELVGKLIEMKRKGNAEHFQEVCKEFSFETGIRSETV.

4Fe-4S ferredoxin-type domains lie at 5–34 (IAEV…VKKA) and 46–76 (YEKG…ENEL). 8 residues coordinate [4Fe-4S] cluster: cysteine 14, cysteine 17, cysteine 20, cysteine 24, cysteine 55, cysteine 58, cysteine 61, and cysteine 65.

In terms of assembly, the FPO complex is composed of at least 13 different subunits. It depends on [4Fe-4S] cluster as a cofactor. The cofactor is FAD.

The protein localises to the membrane. It localises to the cytoplasm. It catalyses the reaction methanophenazine + reduced coenzyme F420-(gamma-L-Glu)(n) = dihydromethanophenazine + oxidized coenzyme F420-(gamma-L-Glu)(n) + H(+). The catalysed reaction is reduced coenzyme F420-(gamma-L-Glu)(n) + 2 oxidized [2Fe-2S]-[ferredoxin] = oxidized coenzyme F420-(gamma-L-Glu)(n) + 2 reduced [2Fe-2S]-[ferredoxin] + 3 H(+). Its function is as follows. Component of the F(420)H(2) dehydrogenase (FPO complex) which is part of the energy-conserving F(420)H(2):heterodisulfide oxidoreductase system. The membrane-bound electron transfer system of the complex plays an important role in the metabolism of methylotrophic methanogens when the organisms grow on methanol or methylamines. Catalyzes the oxidation of methanophenazine to dihydromethanophenazine. It shuttles electrons from F(420)H(2), via FAD and iron-sulfur (Fe-S) centers, to methanophenazine (an electron carrier in the membrane). It couples the redox reaction to proton translocation (for every two electrons transferred, two hydrogen ions are translocated across the cytoplasmic membrane), and thus conserves the redox energy in a proton gradient. It also catalyzes the oxidation of F(420)H(2) with quinones such as 2,3-dimethyl-1,4-naphthoquinone, 2-methyl-1,4-naphthoquinone and tetramethyl-p-benzoquinone. Might have a dual function, acting as an electron input module when connected to the membrane integral Fpo complex, or as a soluble single subunit, being involved in the reoxydation of reduced ferredoxin in the cytoplasm. This is F(420)H(2) dehydrogenase subunit F (fpoF) from Methanosarcina mazei (strain ATCC BAA-159 / DSM 3647 / Goe1 / Go1 / JCM 11833 / OCM 88) (Methanosarcina frisia).